The primary structure comprises 81 residues: Exodeoxyribonuclease 7 small subunit (81 aa).

This sequence belongs to the XseB family. In terms of assembly, heterooligomer composed of large and small subunits.

It is found in the cytoplasm. The enzyme catalyses Exonucleolytic cleavage in either 5'- to 3'- or 3'- to 5'-direction to yield nucleoside 5'-phosphates.. Its function is as follows. Bidirectionally degrades single-stranded DNA into large acid-insoluble oligonucleotides, which are then degraded further into small acid-soluble oligonucleotides. This chain is Exodeoxyribonuclease 7 small subunit, found in Pasteurella multocida (strain Pm70).